The sequence spans 323 residues: Ig gamma chain C region (323 aa).

Ig-like domains follow at residues 6 to 96 (PSVF…KTVA), 114 to 213 (PSVF…KTIS), and 222 to 318 (PKVY…KSIS).

The protein is Ig gamma chain C region of Oryctolagus cuniculus (Rabbit).